An 87-amino-acid chain; its full sequence is U14-lycotoxin-Ls1a (87 aa).

The signal sequence occupies residues 1-20; the sequence is MNSKVFAALLLLALSTCVLS. One can recognise a WAP domain in the interval 21-66; sequence EKYCPTPRNTSCKKMNIRNNCCRDSDCTSNAFCCAEPCGNFCHKAS. Disulfide bonds link C24-C54, C32-C58, C41-C53, C42-C80, and C47-C62.

This sequence belongs to the venom protein 11 family. 01 (wap-1) subfamily. Post-translationally, contains 5 disulfide bonds. Expressed by the venom gland.

Its subcellular location is the secreted. Has antibacterial activity. The protein is U14-lycotoxin-Ls1a of Lycosa singoriensis (Wolf spider).